The chain runs to 341 residues: Hyaluronan and proteoglycan link protein 2 (341 aa).

The N-terminal stretch at 1–27 is a signal peptide; the sequence is MPSWIPLPAFCCLLLPWAFTVFHKTLG. The Ig-like V-type domain occupies 35–143; it reads PHYLLPPIHE…GIEDESVALT (109 aa). Intrachain disulfides connect C58–C129, C171–C241, C195–C216, C266–C337, and C291–C312. Link domains are found at residues 149–243 and 246–339; these read VVFP…FCFT and LAGQ…YCYA.

It belongs to the HAPLN family. Brain.

Its subcellular location is the secreted. The protein resides in the extracellular space. The protein localises to the extracellular matrix. Functionally, mediates a firm binding of versican V2 to hyaluronic acid. May play a pivotal role in the formation of the hyaluronan-associated matrix in the central nervous system (CNS) which facilitates neuronal conduction and general structural stabilization. Binds to hyaluronic acid. The protein is Hyaluronan and proteoglycan link protein 2 (Hapln2) of Rattus norvegicus (Rat).